Consider the following 131-residue polypeptide: Lysozyme C (131 aa).

The C-type lysozyme domain occupies 2–131 (KIYEQCELAR…VSQWIKGCKL (130 aa)). 4 cysteine pairs are disulfide-bonded: Cys7-Cys129, Cys31-Cys117, Cys66-Cys82, and Cys78-Cys96. Residues Glu36 and Asp54 contribute to the active site.

It belongs to the glycosyl hydrolase 22 family. As to quaternary structure, monomer.

The protein resides in the secreted. The catalysed reaction is Hydrolysis of (1-&gt;4)-beta-linkages between N-acetylmuramic acid and N-acetyl-D-glucosamine residues in a peptidoglycan and between N-acetyl-D-glucosamine residues in chitodextrins.. In terms of biological role, lysozymes have primarily a bacteriolytic function; those in tissues and body fluids are associated with the monocyte-macrophage system and enhance the activity of immunoagents. Has strong bacteriolytic activity against M.luteus and V.cholerae, weak bacteriolytic activity against P.aeruginosa and no activity against A.hydrophila. This chain is Lysozyme C (LYZ), found in Pelodiscus sinensis (Chinese softshell turtle).